A 178-amino-acid polypeptide reads, in one-letter code: Ribosome maturation factor RimP (178 aa).

This sequence belongs to the RimP family.

The protein localises to the cytoplasm. Functionally, required for maturation of 30S ribosomal subunits. The sequence is that of Ribosome maturation factor RimP from Caulobacter vibrioides (strain ATCC 19089 / CIP 103742 / CB 15) (Caulobacter crescentus).